A 486-amino-acid chain; its full sequence is UDP-N-acetylmuramate--L-alanine ligase (486 aa).

126-132 (GTHGKTS) contacts ATP.

Belongs to the MurCDEF family.

It is found in the cytoplasm. The enzyme catalyses UDP-N-acetyl-alpha-D-muramate + L-alanine + ATP = UDP-N-acetyl-alpha-D-muramoyl-L-alanine + ADP + phosphate + H(+). The protein operates within cell wall biogenesis; peptidoglycan biosynthesis. In terms of biological role, cell wall formation. In Corynebacterium glutamicum (strain ATCC 13032 / DSM 20300 / JCM 1318 / BCRC 11384 / CCUG 27702 / LMG 3730 / NBRC 12168 / NCIMB 10025 / NRRL B-2784 / 534), this protein is UDP-N-acetylmuramate--L-alanine ligase.